The chain runs to 912 residues: Phosphatidylinositol-3-phosphatase SAC1 (912 aa).

A disordered region spans residues 1–29 (MAKSENSTTSTFSSFANKIQPSNDAESDP). The SAC domain maps to 173-575 (LSSVDLTKDF…GDALAQQYGG (403 aa)). A Phosphatase catalytic core motif is present at residues 511 to 522 (RTNCIDCLDRTN). Residues 715–912 (RPGGNTGSTG…VGDDKVPKVI (198 aa)) form a required for subcellular localization region. A disordered region spans residues 740-766 (LFGSRKPEESSSATKSGADDSEKGVTS).

As to quaternary structure, component of the PI(3,5)P2 regulatory complex at least composed of ATG18, SAC/FIG4, FAB1 and VAC14. Mg(2+) is required as a cofactor. In terms of tissue distribution, ubiquitous with higher expression level in both young elongating and nonelongating stems. Detected in vascular tissues.

The protein localises to the vacuole membrane. Its subcellular location is the golgi apparatus. The catalysed reaction is a 1,2-diacyl-sn-glycero-3-phospho-(1D-myo-inositol-3-phosphate) + H2O = a 1,2-diacyl-sn-glycero-3-phospho-(1D-myo-inositol) + phosphate. It catalyses the reaction a 1,2-diacyl-sn-glycero-3-phospho-(1D-myo-inositol-3,5-bisphosphate) + H2O = a 1,2-diacyl-sn-glycero-3-phospho-(1D-myo-inositol-3-phosphate) + phosphate. The enzyme catalyses a 1,2-diacyl-sn-glycero-3-phospho-(1D-myo-inositol 4-phosphate) + H2O = a 1,2-diacyl-sn-glycero-3-phospho-(1D-myo-inositol) + phosphate. Its function is as follows. Phosphoinositide phosphatase which catalyzes the hydrolysis of phosphatidylinositol-3,5-bisphosphate (PtdIns(3,5)P2). Can also catalyze the hydrolysis of phosphatidylinositol 3-phosphate (PtdIns(3)P) and phosphatidylinositol 4-phosphate (PtdIns(4)P). Required for normal cell morphogenesis, cell wall synthesis, and actin organization. In Arabidopsis thaliana (Mouse-ear cress), this protein is Phosphatidylinositol-3-phosphatase SAC1 (SAC1).